A 335-amino-acid polypeptide reads, in one-letter code: tRNA N6-adenosine threonylcarbamoyltransferase (335 aa).

The Fe cation site is built by histidine 110 and histidine 114. Substrate contacts are provided by residues 132 to 136 (LVSGG), aspartate 165, glycine 178, and asparagine 271. Fe cation is bound at residue aspartate 299.

This sequence belongs to the KAE1 / TsaD family. It depends on Fe(2+) as a cofactor.

It is found in the cytoplasm. It catalyses the reaction L-threonylcarbamoyladenylate + adenosine(37) in tRNA = N(6)-L-threonylcarbamoyladenosine(37) in tRNA + AMP + H(+). Required for the formation of a threonylcarbamoyl group on adenosine at position 37 (t(6)A37) in tRNAs that read codons beginning with adenine. Is involved in the transfer of the threonylcarbamoyl moiety of threonylcarbamoyl-AMP (TC-AMP) to the N6 group of A37, together with TsaE and TsaB. TsaD likely plays a direct catalytic role in this reaction. This is tRNA N6-adenosine threonylcarbamoyltransferase from Campylobacter jejuni subsp. doylei (strain ATCC BAA-1458 / RM4099 / 269.97).